Consider the following 157-residue polypeptide: S-ribosylhomocysteine lyase (157 aa).

3 residues coordinate Fe cation: His54, His58, and Cys124.

Belongs to the LuxS family. In terms of assembly, homodimer. Requires Fe cation as cofactor.

The catalysed reaction is S-(5-deoxy-D-ribos-5-yl)-L-homocysteine = (S)-4,5-dihydroxypentane-2,3-dione + L-homocysteine. Its function is as follows. Involved in the synthesis of autoinducer 2 (AI-2) which is secreted by bacteria and is used to communicate both the cell density and the metabolic potential of the environment. The regulation of gene expression in response to changes in cell density is called quorum sensing. Catalyzes the transformation of S-ribosylhomocysteine (RHC) to homocysteine (HC) and 4,5-dihydroxy-2,3-pentadione (DPD). This is S-ribosylhomocysteine lyase from Lacticaseibacillus paracasei (strain ATCC 334 / BCRC 17002 / CCUG 31169 / CIP 107868 / KCTC 3260 / NRRL B-441) (Lactobacillus paracasei).